Reading from the N-terminus, the 354-residue chain is Membrane progestin receptor beta (354 aa).

Over 1–75 (MTTAILERLS…FFSLFQKHNE (75 aa)) the chain is Cytoplasmic. The helical transmembrane segment at 76-96 (VVNVWTHLLAALAVLLRFWAF) threads the bilayer. The Extracellular portion of the chain corresponds to 97–111 (AEAEALPWASTHSLP). Residues 112-132 (LLLFILSSITYLTCSLLAHLL) traverse the membrane as a helical segment. Topologically, residues 133–174 (QSKSELSHYTFYFVDYVGVSVYQYGSALAHFFYSSDQAWYDR) are cytoplasmic. Residues 175–195 (FWLFFLPAAAFCGWLSCAGCC) traverse the membrane as a helical segment. Residues 196-213 (YAKYRYRRPYPVMRKICQ) lie on the Extracellular side of the membrane. Residues 214–234 (VVPAGLAFILDISPVAHRVAL) form a helical membrane-spanning segment. The Cytoplasmic segment spans residues 235–243 (CHLAGCQEQ). The helical transmembrane segment at 244–264 (AAWYHTLQILFFLVSAYFFSC) threads the bilayer. At 265–283 (PVPEKYFPGSCDIVGHGHQ) the chain is on the extracellular side. The helical transmembrane segment at 284–304 (IFHAFLSICTLSQLEAILLDY) threads the bilayer. Residues 305–319 (QGRQEIFLQRHGPLS) lie on the Cytoplasmic side of the membrane. A helical membrane pass occupies residues 320 to 340 (VHMACLSFFFLAACSAATAAL). At 341–354 (LRHKVKARLTKKDS) the chain is on the extracellular side.

This sequence belongs to the ADIPOR family. In terms of tissue distribution, highly expressed in the hypothalamus. Also expressed in spinal cord, kidney and testis.

It is found in the cell membrane. In terms of biological role, plasma membrane progesterone (P4) receptor coupled to G proteins. Seems to act through a G(i) mediated pathway. May be involved in oocyte maturation. Also binds dehydroepiandrosterone (DHEA), pregnanolone, pregnenolone and allopregnanolone. The chain is Membrane progestin receptor beta from Homo sapiens (Human).